The chain runs to 409 residues: MSDYGFANIEEAKADAIFKLNAQYHQDEDPKKVNMSVGAYRDDTGKPWILPAVKKASKIVEEQASFNHEYLPIAGLPRFTKAAAEVLFRPNPHLLSEDRVASMQSVSGTGANFLAASFIETFYVKHTGAHVYISNPTWPVHRTLWEKLGVTVDTYPYWDAKNRSFDYEGMLSTIKSAPEGSIFLLHACAHNPTGIDPTREQWLSIFESLLSRKHLVVFDIAYQGFASGDLNRDSWALNEFVKYNKDFFVCQSFAKNMGLYGERTGCMHYVAKDASTKNKVLSQLCIVQRNTISNPPAYGARIAAEILNSPQLFAEWEQDLKTMSSRIIEMRKRLRDSLVALKTPGSWDHITQQIGMFSFTGLTPAQVQFCQERYHLYFSANGRISMAGLNNSNVEHVAQAFNHAVRELP.

S2 carries the post-translational modification N-acetylserine. The L-aspartate site is built by G38, W138, and N191. K255 carries the post-translational modification N6-(pyridoxal phosphate)lysine. Position 383 (R383) interacts with L-aspartate. S385 carries the phosphoserine modification.

The protein belongs to the class-I pyridoxal-phosphate-dependent aminotransferase family. Homodimer. Pyridoxal 5'-phosphate serves as cofactor.

The protein localises to the cytoplasm. The enzyme catalyses L-aspartate + 2-oxoglutarate = oxaloacetate + L-glutamate. Its function is as follows. Plays a key role in amino acid metabolism. This is Aspartate aminotransferase, cytoplasmic from Schizosaccharomyces pombe (strain 972 / ATCC 24843) (Fission yeast).